The chain runs to 428 residues: Trigger factor (428 aa).

The PPIase FKBP-type domain occupies 163 to 248 (GDMVVIDYKG…VHEIKEKELP (86 aa)).

Belongs to the FKBP-type PPIase family. Tig subfamily.

The protein localises to the cytoplasm. The enzyme catalyses [protein]-peptidylproline (omega=180) = [protein]-peptidylproline (omega=0). Functionally, involved in protein export. Acts as a chaperone by maintaining the newly synthesized protein in an open conformation. Functions as a peptidyl-prolyl cis-trans isomerase. The polypeptide is Trigger factor (Alkaliphilus metalliredigens (strain QYMF)).